The following is a 170-amino-acid chain: Calcineurin subunit B type 2 (170 aa).

A lipid anchor (N-myristoyl glycine) is attached at glycine 2. EF-hand domains follow at residues 18–46 (DEIK…FMSL), 50–85 (RHNP…FSVK), 87–122 (DEEQ…MVGN), and 128–163 (QLQQ…LEIH). Residues aspartate 31, aspartate 33, serine 35, serine 37, glutamate 42, aspartate 63, aspartate 65, aspartate 67, glutamate 69, glutamate 74, aspartate 100, aspartate 102, aspartate 104, tyrosine 106, and glutamate 111 each coordinate Ca(2+). The interval 131–136 (QLVDKT) is calcineurin A binding. Ca(2+)-binding residues include aspartate 141, aspartate 143, aspartate 145, lysine 147, and glutamate 152.

The protein belongs to the calcineurin regulatory subunit family. In terms of assembly, forms a complex composed of a calmodulin-dependent catalytic subunit (also known as calcineurin A) and a regulatory Ca(2+)-binding subunit (also known as calcineurin B). There are three catalytic subunits, each encoded by a separate gene (PPP3CA, PPP3CB, and PPP3CC) and two regulatory subunits which are also encoded by separate genes (PPP3R1 and PPP3R2). Interacts with SPATA33 (via PQIIIT motif). As to expression, testis-specific.

The protein resides in the mitochondrion. Functionally, regulatory subunit of calcineurin, a calcium-dependent, calmodulin stimulated protein phosphatase. Confers calcium sensitivity. The sequence is that of Calcineurin subunit B type 2 (PPP3R2) from Homo sapiens (Human).